Here is a 546-residue protein sequence, read N- to C-terminus: Cytokine-like nuclear factor N-PAC (546 aa).

Residues 8 to 66 enclose the PWWP domain; it reads LGDLVWGKLGRYPPWPGKIVNPPKDLKKPRGKKCFFVKFFGTEDHAWIKVEQLKPYHAH. Basic and acidic residues-rich tracts occupy residues 91 to 145 and 161 to 181; these read RRAK…EGKK and RAQEQSPRKRGRPPKDEKDLT. The tract at residues 91–187 is disordered; sequence RRAKGKDQTS…KDLTIPESST (97 aa). Position 130 is a phosphoserine (S130). Residue K135 forms a Glycyl lysine isopeptide (Lys-Gly) (interchain with G-Cter in SUMO2) linkage. S166 is subject to Phosphoserine. A DNA-binding region (a.T hook) is located at residues 167–179; sequence PRKRGRPPKDEKD. Residues K175, K178, K200, and K210 each participate in a glycyl lysine isopeptide (Lys-Gly) (interchain with G-Cter in SUMO2) cross-link. The interval 213–216 is interaction with histone H3; the sequence is DPHF. The interaction with KDM1B stretch occupies residues 215–224; the sequence is HFHHFLLSQT. Glycyl lysine isopeptide (Lys-Gly) (interchain with G-Cter in SUMO2) cross-links involve residues K226, K236, K239, and K268. The tract at residues 260-546 is dehydrogenase domain; sequence GSITPTDKKI…MSAVYRAYIH (287 aa). Residue 270–284 coordinates NAD(+); that stretch reads GFLGLGLMGSGIVSN. Residue K301 forms a Glycyl lysine isopeptide (Lys-Gly) (interchain with G-Cter in SUMO2) linkage. Positions 355 and 498 each coordinate NAD(+). A Phosphoserine modification is found at S533.

The protein belongs to the HIBADH-related family. NP60 subfamily. In terms of assembly, homotetramere. Interacts with MAPK14. Interacts with KDM1B at nucleosomes; this interaction stimulates H3K4me1 and H3K4me2 demethylation. Binds to mononucleosomes. Interacts with GATA4; the interaction is required for a synergistic activation of GATA4 target genes transcription.

Its subcellular location is the nucleus. It is found in the chromosome. In terms of biological role, cytokine-like nuclear factor with chromatin gene reader activity involved in chromatin modification and regulation of gene expression. Acts as a nucleosome-destabilizing factor that is recruited to genes during transcriptional activation. Recognizes and binds histone H3 without a preference for specific epigenetic markers and also binds DNA. Interacts with KDM1B and promotes its histone demethylase activity by facilitating the capture of H3 tails, they form a multifunctional enzyme complex that modifies transcribed chromatin and facilitates Pol II transcription through nucleosomes. Stimulates the acetylation of 'Lys-56' of nucleosomal histone H3 (H3K56ac) by EP300. With GATA4, co-binds a defined set of heart development genes and coregulates their expression during cardiomyocyte differentiation. Regulates p38 MAP kinase activity by mediating stress activation of MAPK14/p38alpha and specifically regulating MAPK14 signaling. Indirectly promotes phosphorylation of MAPK14 and activation of ATF2. The phosphorylation of MAPK14 requires upstream activity of MAP2K4 and MAP2K6. The sequence is that of Cytokine-like nuclear factor N-PAC from Mus musculus (Mouse).